Consider the following 501-residue polypeptide: Zinc finger protein 704 (501 aa).

Over residues serine 80–glycine 96 the composition is skewed to polar residues. 3 disordered regions span residues serine 80–serine 138, proline 183–glycine 203, and tryptophan 216–glutamate 267. Positions glutamate 115 to arginine 137 are enriched in basic and acidic residues. Residues phenylalanine 281–histidine 306 form a C2H2-type zinc finger. Disordered regions lie at residues serine 340–alanine 380, proline 398–serine 419, phenylalanine 427–histidine 446, and leucine 453–lysine 472. A compositionally biased stretch (low complexity) spans serine 368–alanine 380. The short motif at lysine 472–lysine 476 is the CR1 element. The CR2 signature appears at cysteine 490 to lysine 494.

The protein localises to the nucleus. In terms of biological role, transcription factor. The polypeptide is Zinc finger protein 704 (znf704) (Danio rerio (Zebrafish)).